The sequence spans 269 residues: 4-hydroxy-tetrahydrodipicolinate reductase (269 aa).

NAD(+) is bound by residues 10 to 15 (GANGRM), Glu-36, 99 to 101 (GTT), and 123 to 126 (AANF). Catalysis depends on His-156, which acts as the Proton donor/acceptor. His-157 lines the (S)-2,3,4,5-tetrahydrodipicolinate pocket. Lys-160 (proton donor) is an active-site residue. 166-167 (GT) provides a ligand contact to (S)-2,3,4,5-tetrahydrodipicolinate.

Belongs to the DapB family.

Its subcellular location is the cytoplasm. It catalyses the reaction (S)-2,3,4,5-tetrahydrodipicolinate + NAD(+) + H2O = (2S,4S)-4-hydroxy-2,3,4,5-tetrahydrodipicolinate + NADH + H(+). The catalysed reaction is (S)-2,3,4,5-tetrahydrodipicolinate + NADP(+) + H2O = (2S,4S)-4-hydroxy-2,3,4,5-tetrahydrodipicolinate + NADPH + H(+). Its pathway is amino-acid biosynthesis; L-lysine biosynthesis via DAP pathway; (S)-tetrahydrodipicolinate from L-aspartate: step 4/4. Catalyzes the conversion of 4-hydroxy-tetrahydrodipicolinate (HTPA) to tetrahydrodipicolinate. This chain is 4-hydroxy-tetrahydrodipicolinate reductase, found in Neisseria meningitidis serogroup B (strain ATCC BAA-335 / MC58).